The sequence spans 165 residues: MAPEENAGSELLLQSFKRRFLAARALRSFRWQSLEAKLRDSSDSELLRDILQKHEAVHTEPLDELYEVLVETLMAKESTQGHRSYLLTCCIAQKPSCRWSGSCGGWLPAGSTSGLLNSTWPLPSATQRCASCSPPSYAGLGSDGKRKLIMTRNCFPTESTWRWQS.

The protein belongs to the class I-like SAM-binding methyltransferase superfamily. EEF2KMT family. As to quaternary structure, interacts with EEF2KMT.

This is Putative protein FAM86C1P from Homo sapiens (Human).